Reading from the N-terminus, the 260-residue chain is Voltage-dependent calcium channel gamma-6 subunit (260 aa).

The next 4 helical transmembrane spans lie at Leu43–Val63, Val143–Leu163, Phe169–Leu189, and Leu221–Leu241.

This sequence belongs to the PMP-22/EMP/MP20 family. CACNG subfamily. As to quaternary structure, interacts with CACNA1C. Identified in a complex with the L-type calcium channel subunits CACNA1C, CACNA2D1 and either CACNB1 or CACNB2. As to expression, detected in heart atrium and ventricle, aorta and skeletal muscle. Detected in heart left ventricle.

Its subcellular location is the cell membrane. Functionally, regulates the activity of L-type calcium channels that contain CACNA1C as pore-forming subunit. This is Voltage-dependent calcium channel gamma-6 subunit (Cacng6) from Rattus norvegicus (Rat).